A 414-amino-acid chain; its full sequence is Lactosylceramide alpha-2,3-sialyltransferase (414 aa).

Residues 1–65 are Cytoplasmic-facing; the sequence is MHTEAVGGAA…MRRPSLLIKD (65 aa). The helical; Signal-anchor for type II membrane protein transmembrane segment at 66-86 threads the bilayer; sequence ICKCTLVAFGVWLLYILILNY. The Lumenal portion of the chain corresponds to 87 to 414; that stretch reads TAEECDMKRM…VVEDLSGGIH (328 aa). C194 and C352 are disulfide-bonded. Residues N235, N279, and N389 are each glycosylated (N-linked (GlcNAc...) asparagine).

Belongs to the glycosyltransferase 29 family. Mainly expressed in brain, and then testis, heart and liver, almost all tissues showed some levels of the gene expression.

The protein localises to the golgi apparatus membrane. The enzyme catalyses a beta-D-Gal-(1-&gt;4)-beta-D-Glc-(1&lt;-&gt;1)-Cer(d18:1(4E)) + CMP-N-acetyl-beta-neuraminate = a ganglioside GM3 (d18:1(4E)) + CMP + H(+). It carries out the reaction ganglioside GA2 (d18:1(4E)/18:0) + CMP-N-acetyl-beta-neuraminate = ganglioside GM2 (d18:1(4E)/18:0) + CMP + H(+). It catalyses the reaction a beta-D-Gal-(1&lt;-&gt;1')-ceramide + CMP-N-acetyl-beta-neuraminate = N-acetyl-alpha-neuraminosyl-(2-&gt;3)-beta-D-galactosyl-(1&lt;-&gt;1')-ceramide + CMP + H(+). The catalysed reaction is ganglioside GA1 (d18:1(4E)/18:0) + CMP-N-acetyl-beta-neuraminate = ganglioside GM1 (d18:1(4E)/18:0) + CMP + H(+). In terms of biological role, (Microbial infection) Gangliosides GD1b and GT1b (derived from GM3) may serve as receptors for some C.botulinum neurotoxins (minimally types BoNT/A, B, C). Its function is as follows. Transfers the sialyl group (N-acetyl-alpha-neuraminyl or NeuAc) from CMP-NeuAc to the non-reducing terminal galactose (Gal) of glycosphingolipids forming gangliosides (important molecules involved in the regulation of multiple cellular processes, including cell proliferation and differentiation, apoptosis, embryogenesis, development, and oncogenesis). Mainly involved in the biosynthesis of ganglioside GM3 but can also use different glycolipids as substrate acceptors such as D-galactosylceramide (GalCer), asialo-GM2 (GA2) and asialo-GM1 (GA1), although less preferentially than beta-D-Gal-(1-&gt;4)-beta-D-Glc-(1&lt;-&gt;1)-Cer (LacCer). The protein is Lactosylceramide alpha-2,3-sialyltransferase (St3gal5) of Mus musculus (Mouse).